A 156-amino-acid chain; its full sequence is Gamma-L-glutamyl-butirosin B gamma-glutamyl cyclotransferase (156 aa).

Position 24–27 (24–27) interacts with substrate; sequence YGTL. Residue Glu89 is the Proton acceptor of the active site.

This sequence belongs to the gamma-glutamylcyclotransferase family.

The enzyme catalyses gamma-L-glutamyl-butirosin B = butirosin B + 5-oxo-L-proline. It participates in antibiotic biosynthesis; butirosin biosynthesis. Cyclotransferase that catalyzes the last step in the biosynthesis of the aminoglycoside antibiotic butirosin B. Cleaves the amide bond via transamidation using the alpha-amine of the terminal gamma-L-glutamate of the side chain, releasing it as the cyclic 5-oxoproline. The polypeptide is Gamma-L-glutamyl-butirosin B gamma-glutamyl cyclotransferase (btrG) (Niallia circulans (Bacillus circulans)).